The sequence spans 152 residues: Endoribonuclease YbeY (152 aa).

His-101, His-105, and His-111 together coordinate Zn(2+). Residues 132 to 152 (PSSLIERTTKPAKKAAKRKKR) form a disordered region. Basic residues predominate over residues 141-152 (KPAKKAAKRKKR).

The protein belongs to the endoribonuclease YbeY family. Zn(2+) is required as a cofactor.

Its subcellular location is the cytoplasm. Single strand-specific metallo-endoribonuclease involved in late-stage 70S ribosome quality control and in maturation of the 3' terminus of the 16S rRNA. The polypeptide is Endoribonuclease YbeY (Koribacter versatilis (strain Ellin345)).